The sequence spans 1108 residues: MWLKPEEVLLKNALKLWVTEKSNDYFVLQRRRGYGEDSGGLTGLLVGTLDTVLDSTAKVAPFRILHQTPDSQVYWTIACGASLEEISQHWDWLQQNIVRTLSVFDSGEDITSFVQGKIRGLIAEEGTSAGDEEDPERFREAVLRFERLFGLPQREKLVTYFSCSYWRGRVPNQGWIYLSTNFLCFYSYMLGNEVKLVYPWDEVSRLERTSSVLLAESIRVRVRGEDHFFSMLLRLQQTYLIMQQLADYAIVRFFDKETFHAEHPLANPLHITQRALEIHARNQSFRSFFRLPQEENLCEVYESFLWVPFSHVNTLGKICVSENYLCFASQDGSQCHLIIPLWEVFSVELPDRSSRALTVCLRGKRALRFSEVRDFERLAATIRRKCGTLGSPQHCITNPDEEGVMVGQSQAVSTEALMNVFHPHDAENLDPKMLKERMKEQSWQIHFAEYGRGTGMFCTKKTRDLIVRGVPETLRGELWMLFSGAVHDMISHPGYYGRLLEDCMGSSSLACDEIERDLHRSLPEHPAFQSDTGISALRRVLTAYAHRNPKIGYCQAMNILTSVLLLYAKEEEAFWLLVAVCERMLPDYFNRRIIGALVDQAVFEELIREHLTQLTEHMTDLSFFSSVSLSWFLTLFISVLPIESAVNVVDCFFYDGIKAILQLGLAVLDYNMDNLLCCNDDAEAVTVLNRFFDSVTNKDSPLPATVQQASATANDKSIQKVDISDLIKEAYEKYGDIRTEEVENMRKRNKLYVIQTLEDTTKQNVLRVVAQDVKFSASQLDELYLLFKNHDPSLPYLDQYQLDQSQFSSLFNLLQPWTTHTHSRSLARSAFHLLDENGDGLVNFKEFICGLDILYNRSFTEKLKLLFKLHLQPDSAEDGVIRKCPERGRAKVDLQEYLKQWQEDLQRREENIKDLPRINQVQFISLTKTLYSVFHGDEEEESLYRAVARVTSLLLRMEEVGRKLQDSSPQKTPQTTPTSTSQPESSPTKPTSPESETPAESRSTHDQPESPVSQHETAPSHSDITPNSTSHPSTPTSSPTETSSPVLDTPTDTPSSPCTVRDGDWSFSFEQILASLLNEPSVVRFFERVVNTDTLITRARKNQLKDAH.

GRAM domains are found at residues Leu-143–Ser-210 and Gln-283–Asp-351. The region spanning Gly-469–Gly-656 is the Rab-GAP TBC domain. One can recognise an EF-hand domain in the interval His-822–Arg-857. Residues Asp-835, Asn-837, Asp-839, and Glu-846 each contribute to the Ca(2+) site. The segment at Gly-961–Thr-1059 is disordered. Residues Ser-967–Pro-998 show a composition bias toward low complexity. The segment covering Ser-1010–Ile-1024 has biased composition (polar residues). Residues Thr-1025–Pro-1057 show a composition bias toward low complexity.

Its subcellular location is the cytoplasm. It localises to the cytosol. Functionally, involved in vesicular recycling, probably as a GTPase-activating protein for Rab family protein(s). The protein is TBC1 domain family member 8B (tbc1d8b) of Danio rerio (Zebrafish).